Reading from the N-terminus, the 320-residue chain is Methionyl-tRNA formyltransferase (320 aa).

112–115 (SLLP) is a binding site for (6S)-5,6,7,8-tetrahydrofolate.

Belongs to the Fmt family.

The enzyme catalyses L-methionyl-tRNA(fMet) + (6R)-10-formyltetrahydrofolate = N-formyl-L-methionyl-tRNA(fMet) + (6S)-5,6,7,8-tetrahydrofolate + H(+). Attaches a formyl group to the free amino group of methionyl-tRNA(fMet). The formyl group appears to play a dual role in the initiator identity of N-formylmethionyl-tRNA by promoting its recognition by IF2 and preventing the misappropriation of this tRNA by the elongation apparatus. The chain is Methionyl-tRNA formyltransferase from Allorhizobium ampelinum (strain ATCC BAA-846 / DSM 112012 / S4) (Agrobacterium vitis (strain S4)).